Reading from the N-terminus, the 119-residue chain is Flagellar transcriptional regulator FlhD (119 aa).

The protein belongs to the FlhD family. In terms of assembly, homodimer; disulfide-linked. Forms a heterohexamer composed of two FlhC and four FlhD subunits. Each FlhC binds a FlhD dimer, forming a heterotrimer, and a hexamer assembles by dimerization of two heterotrimers.

It localises to the cytoplasm. In terms of biological role, functions in complex with FlhC as a master transcriptional regulator that regulates transcription of several flagellar and non-flagellar operons by binding to their promoter region. Activates expression of class 2 flagellar genes, including fliA, which is a flagellum-specific sigma factor that turns on the class 3 genes. Also regulates genes whose products function in a variety of physiological pathways. This is Flagellar transcriptional regulator FlhD from Escherichia fergusonii (strain ATCC 35469 / DSM 13698 / CCUG 18766 / IAM 14443 / JCM 21226 / LMG 7866 / NBRC 102419 / NCTC 12128 / CDC 0568-73).